The primary structure comprises 88 residues: Large ribosomal subunit protein bL27 (88 aa).

The interval 1 to 21 (MAHKKGQGSTQNNRDSAGRRL) is disordered.

This sequence belongs to the bacterial ribosomal protein bL27 family.

The polypeptide is Large ribosomal subunit protein bL27 (Helicobacter pylori (strain J99 / ATCC 700824) (Campylobacter pylori J99)).